A 1085-amino-acid polypeptide reads, in one-letter code: Extracellular calcium-sensing receptor (1085 aa).

The N-terminal stretch at 1–19 (MALYSCCWILLAFSTWCTS) is a signal peptide. The Extracellular segment spans residues 20 to 611 (AYGPDQRAQK…KEIEFLSWTE (592 aa)). A ligand-binding 1 (LB1) region spans residues 23–189 (PDQRAQKKGD…QFKSFLRTIP (167 aa)). Cysteines 61 and 102 form a disulfide. 67–71 (RGFRW) is a phosphate binding site. Residues Ile-82, Ser-85, Leu-88, and Leu-89 each contribute to the Ca(2+) site. An N-linked (GlcNAc...) asparagine glycan is attached at Asn-91. Ca(2+) is bound at residue Thr-101. Asn-131 is a glycosylation site (N-linked (GlcNAc...) asparagine). Residue Thr-146 participates in Ca(2+) binding. L-tryptophan contacts are provided by Ser-148, Ala-169, and Ser-171. Residues Ser-171, Pro-189, Asp-191, Glu-232, and Asp-235 each contribute to the Ca(2+) site. Residues 190–325 (NDEHQATAMA…GGTIGFGLKA (136 aa)) are ligand-binding 2 (LB2). Disulfide bonds link Cys-237–Cys-562, Cys-359–Cys-396, Cys-438–Cys-450, Cys-543–Cys-563, Cys-547–Cys-566, Cys-569–Cys-583, and Cys-586–Cys-599. Spermine is bound by residues Asp-239 and Ser-241. N-linked (GlcNAc...) asparagine glycosylation is found at Asn-262 and Asn-288. Ca(2+) is bound at residue Glu-298. Glu-298 is an L-tryptophan binding site. Asn-401 is a glycosylation site (N-linked (GlcNAc...) asparagine). Residue 416–418 (RIS) coordinates phosphate. Residues Asn-447, Asn-469, and Asn-489 are each glycosylated (N-linked (GlcNAc...) asparagine). Residue Tyr-490 participates in Ca(2+) binding. An N-linked (GlcNAc...) asparagine glycan is attached at Asn-542. Positions 543-613 (CSRDCLAGTR…IEFLSWTEPF (71 aa)) are cysteine-rich (CR). Gly-558 provides a ligand contact to Ca(2+). Asn-595 carries an N-linked (GlcNAc...) asparagine glycan. A helical transmembrane segment spans residues 612-637 (PFGIALTLFAVLGIFLTAFVLGVFIK). The Cytoplasmic segment spans residues 638–649 (FRNTPIVKATNR). The segment at 638 to 649 (FRNTPIVKATNR) is intracellular loop 1 (ICL1). Residues 650-669 (ELSYLLLFSLLCCFSSSLFF) form a helical membrane-spanning segment. At 670–675 (IGEPQD) the chain is on the extracellular side. A helical membrane pass occupies residues 676-699 (WTCRLRQPAFGISFVLCISCILVK). The Cytoplasmic portion of the chain corresponds to 700–723 (TNRVLLVFEAKIPTSFHRKWWGLN). The interval 700–723 (TNRVLLVFEAKIPTSFHRKWWGLN) is intracellular loop 2 (ICL2). A helical transmembrane segment spans residues 724-746 (LQFLLVFLCTFMQIVICAIWLNT). Topologically, residues 747 to 770 (APPSSYRNHELEDEIIFITCHEGS) are extracellular. Residues 771-790 (LMALGFLIGYTCLLAAICFF) traverse the membrane as a helical segment. The Cytoplasmic segment spans residues 791-806 (FAFKSRKLPENFNEAK). The tract at residues 791 to 806 (FAFKSRKLPENFNEAK) is intracellular loop 3 (ICL3). Residues 807 to 829 (FITFSMLIFFIVWISFIPAYAST) form a helical membrane-spanning segment. The Extracellular segment spans residues 830 to 833 (YGKF). Residues 834–855 (VSAVEVIAILAASFGLLACIFF) traverse the membrane as a helical segment. Topologically, residues 856 to 1085 (NKVYIILFKP…STVTENMLRS (230 aa)) are cytoplasmic. A C-terminus region spans residues 856-1085 (NKVYIILFKP…STVTENMLRS (230 aa)). The tract at residues 881 to 901 (AFKVAARATLRRSNVSRQRSS) is interaction with RNF19A. Position 889 is a phosphothreonine (Thr-889). Positions 891–899 (RRSNVSRQR) are arginine-rich retention motif. Ser-893, Ser-900, and Ser-921 each carry phosphoserine. Low complexity predominate over residues 893 to 938 (SNVSRQRSSSLGGSTGSTPSSSISSKSNSEDPFPQQQPKRQKQPQP). Disordered stretches follow at residues 893-969 (SNVS…PPRC) and 1034-1058 (SQET…EEMS). Residues 950 to 960 (QPRPPSTPQPQ) are compositionally biased toward pro residues. Ser-1068 is subject to Phosphoserine.

This sequence belongs to the G-protein coupled receptor 3 family. As to quaternary structure, homodimer; disulfide-linked. Interacts with VCP. Interacts with ARRB1. Phosphorylation at Thr-889 by PKC impairs coupling with G(q)/G(11) G-proteins, while it does not affect G(i)/G(o)-coupling. Phosphorylation at Ser-893 by PKC and Ser-900 by PKA promote plasma membrane localization. In terms of processing, ubiquitinated by RNF19A; which induces proteasomal degradation.

It is found in the cell membrane. In resting state, adopts an open conformation, anion-binding promoting the inactive configuration. Upon aromatic amino acid-binding, the groove in the extracellular venus flytrap module is closed, thereby inducing the formation of a novel homodimer interface between subunits. Calcium ions stabilize the active state by enhancing homodimer interactions between membrane-proximal domains to fully activate the receptor. Upon activation, the homodimer adopts an asymmetric configuration of the 7-transmembrane region that primes one protomer for G-protein coupling. G-protein binding expands the transmembrane dimer interface; the restriction imposed by the receptor dimer, in combination with intracellular loop 2 (ICL2), enables G-protein activation by facilitating conformational transition of G-protein alpha. Coupling to different classes of G-proteins results in distinct CASR-G-protein interfaces. G-protein-coupled receptor that senses changes in the extracellular concentration of calcium ions and plays a key role in maintaining calcium homeostasis. Senses fluctuations in the circulating calcium concentration: activated by elevated circulating calcium, leading to decreased parathyroid hormone (PTH) secretion in parathyroid glands. In kidneys, acts as a key regulator of renal tubular calcium resorption. Ligand binding causes a conformation change that triggers signaling via guanine nucleotide-binding proteins (G-proteins) and modulates the activity of downstream effectors. CASR is coupled with different G(q)/G(11), G(i)/G(o)- or G(s)-classes of G-proteins depending on the context. In the parathyroid and kidney, CASR signals through G(q)/G(11) and G(i)/G(o) G-proteins: G(q)/G(11) coupling activates phospholipase C-beta, releasing diacylglycerol (DAG) and inositol 1,4,5-trisphosphate (IP3) second messengers, while G(i)/G(o) coupling mediates inhibition of adenylate cyclase activity. The G-protein-coupled receptor activity is activated by a co-agonist mechanism: aromatic amino acids, such as Trp or Phe, act concertedly with divalent cations, such as calcium or magnesium, to achieve full receptor activation. Acts as an activator of the NLRP3 inflammasome via G(i)/G(o)-mediated signaling: down-regulation of cyclic AMP (cAMP) relieving NLRP3 inhibition by cAMP. Acts as a regulator of proton-sensing receptor GPR68 in a seesaw manner: CASR-mediated signaling inhibits GPR68 signaling in response to extracellular calcium, while GPR68 inhibits CASR in presence of extracellular protons. This chain is Extracellular calcium-sensing receptor (CASR), found in Bos taurus (Bovine).